Here is a 223-residue protein sequence, read N- to C-terminus: Ribosome maturation factor RimM (223 aa).

Residues 1-12 (MARRPGSSSRGP) are compositionally biased toward low complexity. Disordered regions lie at residues 1 to 44 (MARR…DPGL) and 203 to 223 (VADPPDDLFAPPGPKPADDPG). Residues 135-210 (DEDEFFLTDL…KVVADPPDDL (76 aa)) form the PRC barrel domain.

It belongs to the RimM family. In terms of assembly, binds ribosomal protein uS19.

It localises to the cytoplasm. Its function is as follows. An accessory protein needed during the final step in the assembly of 30S ribosomal subunit, possibly for assembly of the head region. Essential for efficient processing of 16S rRNA. May be needed both before and after RbfA during the maturation of 16S rRNA. It has affinity for free ribosomal 30S subunits but not for 70S ribosomes. This Methylorubrum extorquens (strain CM4 / NCIMB 13688) (Methylobacterium extorquens) protein is Ribosome maturation factor RimM.